The following is a 140-amino-acid chain: Cytochrome c-type biogenesis protein CcmE (140 aa).

The Cytoplasmic segment spans residues 1 to 7 (MTKRQNR). A helical; Signal-anchor for type II membrane protein membrane pass occupies residues 8 to 28 (MVLVALLVIGVSLAGYLGLKA). Residues 29-140 (FNENLLYFLS…DALEKAKNKQ (112 aa)) lie on the Periplasmic side of the membrane. Heme contacts are provided by H120 and Y124.

The protein belongs to the CcmE/CycJ family.

The protein resides in the cell inner membrane. In terms of biological role, heme chaperone required for the biogenesis of c-type cytochromes. Transiently binds heme delivered by CcmC and transfers the heme to apo-cytochromes in a process facilitated by CcmF and CcmH. This is Cytochrome c-type biogenesis protein CcmE from Vesicomyosocius okutanii subsp. Calyptogena okutanii (strain HA).